Reading from the N-terminus, the 602-residue chain is Exopolysaccharide phosphotransferase SCO2594 (602 aa).

The segment at proline 251 to leucine 271 is disordered.

It belongs to the stealth family.

The protein is Exopolysaccharide phosphotransferase SCO2594 of Streptomyces coelicolor (strain ATCC BAA-471 / A3(2) / M145).